Here is a 111-residue protein sequence, read N- to C-terminus: Large ribosomal subunit protein uL22 (111 aa).

Belongs to the universal ribosomal protein uL22 family. Part of the 50S ribosomal subunit.

In terms of biological role, this protein binds specifically to 23S rRNA; its binding is stimulated by other ribosomal proteins, e.g. L4, L17, and L20. It is important during the early stages of 50S assembly. It makes multiple contacts with different domains of the 23S rRNA in the assembled 50S subunit and ribosome. The globular domain of the protein is located near the polypeptide exit tunnel on the outside of the subunit, while an extended beta-hairpin is found that lines the wall of the exit tunnel in the center of the 70S ribosome. The sequence is that of Large ribosomal subunit protein uL22 from Citrifermentans bemidjiense (strain ATCC BAA-1014 / DSM 16622 / JCM 12645 / Bem) (Geobacter bemidjiensis).